Reading from the N-terminus, the 482-residue chain is Probable glycine dehydrogenase (decarboxylating) subunit 2 (482 aa).

K267 is subject to N6-(pyridoxal phosphate)lysine.

It belongs to the GcvP family. C-terminal subunit subfamily. As to quaternary structure, the glycine cleavage system is composed of four proteins: P, T, L and H. In this organism, the P 'protein' is a heterodimer of two subunits. Pyridoxal 5'-phosphate is required as a cofactor.

It carries out the reaction N(6)-[(R)-lipoyl]-L-lysyl-[glycine-cleavage complex H protein] + glycine + H(+) = N(6)-[(R)-S(8)-aminomethyldihydrolipoyl]-L-lysyl-[glycine-cleavage complex H protein] + CO2. In terms of biological role, the glycine cleavage system catalyzes the degradation of glycine. The P protein binds the alpha-amino group of glycine through its pyridoxal phosphate cofactor; CO(2) is released and the remaining methylamine moiety is then transferred to the lipoamide cofactor of the H protein. The chain is Probable glycine dehydrogenase (decarboxylating) subunit 2 from Aquifex aeolicus (strain VF5).